We begin with the raw amino-acid sequence, 241 residues long: GLIPR1-like protein 1 (241 aa).

Residues 1-22 (MILRKKLSYLWTLGLCLVASKS) form the signal peptide. One can recognise an SCP domain in the interval 39 to 172 (LRLHNEARTN…PDSALLVCNY (134 aa)). S220 carries GPI-anchor amidated serine lipidation. Residues 221–241 (GTRQLIACNPLYLISVLLTIF) constitute a propeptide, removed in mature form.

The protein belongs to the CRISP family. As to quaternary structure, part of a oolemmal binding multimeric complex (IZUMO1 complex) composed at least of IZUMO1 and GLIPR1L1; the complex assemblage is influenced by the maturation status of the male germ cell. Interacts with IZUMO1. In terms of processing, N-glycosylated. N-glycosylation decreases during the transit in the caput. Highly expressed in testis, where it localizes to round and elongating spermatids and differentiated spermatozoa in the seminiferous tubules and epididymis (at protein level).

The protein localises to the cytoplasmic vesicle. It is found in the secretory vesicle. Its subcellular location is the acrosome. The protein resides in the cell membrane. It localises to the membrane raft. In terms of biological role, required for optimal fertilization at the stage of sperm-oocyte fusion, plays a role in optimizing acrosome function, the translocation of IZUMO1 during the acrosome reaction and the fertilization process. Component of epididymosomes, one type of membranous microvesicules which mediate the transfer of lipids and proteins to spermatozoa plasma membrane during epididymal maturation. Also a component of the CD9-positive microvesicules found in the cauda region. The polypeptide is GLIPR1-like protein 1 (Bos taurus (Bovine)).